The chain runs to 333 residues: Flotillin-like protein FloA (333 aa).

Transmembrane regions (helical) follow at residues L8 to I28 and V30 to G50.

This sequence belongs to the flotillin-like FloA family. In terms of assembly, homooligomerizes.

It is found in the cell membrane. Its subcellular location is the membrane raft. Functionally, found in functional membrane microdomains (FMM) that may be equivalent to eukaryotic membrane rafts. FMMs are highly dynamic and increase in number as cells age. Flotillins are thought to be important factors in membrane fluidity. The sequence is that of Flotillin-like protein FloA from Desulfitobacterium hafniense (strain DSM 10664 / DCB-2).